Reading from the N-terminus, the 558-residue chain is Phosphatidylserine lipase ABHD16A (558 aa).

The next 2 membrane-spanning stretches (helical) occupy residues 60–80 (ILAL…FAFF) and 93–113 (VVPF…VACL). Residues 114–558 (RGIGRWTNPQ…AQHFQMPWCL (445 aa)) are Cytoplasmic-facing. Residues 281–407 (LVICCEGNAG…LVTRTVRQHL (127 aa)) enclose the AB hydrolase-1 domain. Active-site charge relay system residues include serine 355, aspartate 430, and histidine 507.

This sequence belongs to the AB hydrolase superfamily. ABHD16 family.

It localises to the membrane. It carries out the reaction 1-heptadecanoyl-2-(5Z,8Z,11Z,14Z-eicosatetraenoyl)-sn-glycero-3-phosphoserine + H2O = 1-heptadecanoyl-sn-glycero-3-phosphoserine + (5Z,8Z,11Z,14Z)-eicosatetraenoate + H(+). The enzyme catalyses 1-hexadecanoyl-2-(9Z-octadecenoyl)-sn-glycero-3-phospho-L-serine + H2O = 1-hexadecanoyl-sn-glycero-3-phospho-L-serine + (9Z)-octadecenoate + H(+). The catalysed reaction is 1-octadecanoyl-2-(9Z,12Z-octadecadienoyl)-sn-glycero-3-phosphoserine + H2O = 1-octadecanoyl-sn-glycero-3-phosphoserine + (9Z,12Z)-octadecadienoate + H(+). It catalyses the reaction 1-heptadecanoyl-2-(5Z,8Z,11Z,14Z-eicosatetraenoyl)-sn-glycero-3-phosphocholine + H2O = 1-heptadecanoyl-sn-glycero-3-phosphocholine + (5Z,8Z,11Z,14Z)-eicosatetraenoate + H(+). It carries out the reaction 1-hexadecanoyl-2-(9Z-octadecenoyl)-sn-glycero-3-phosphoglycerol + H2O = 1-hexadecanoyl-sn-glycero-3-phosphoglycerol + (9Z)-octadecenoate + H(+). The enzyme catalyses 1-hexadecanoyl-2-(9Z-octadecenoyl)-sn-glycero-3-phospho-(1D-myo-inositol) + H2O = 1-hexadecanoyl-sn-glycero-3-phospho-(1D-myo-inositol) + (9Z)-octadecenoate + H(+). The catalysed reaction is 1-heptadecanoyl-2-(5Z,8Z,11Z,14Z-eicosatetraenoyl)-sn-glycero-3-phosphoethanolamine + H2O = 1-heptadecanoyl-sn-glycero-3-phosphoethanolamine + (5Z,8Z,11Z,14Z)-eicosatetraenoate + H(+). It catalyses the reaction 1-hexadecanoyl-2-(9Z-octadecenoyl)-sn-glycero-3-phospho-(1'-sn-glycerol) + H2O = 1-hexadecanoyl-sn-glycero-3-phospho-(1'-sn-glycerol) + (9Z)-octadecenoate + H(+). It carries out the reaction Hydrolyzes glycerol monoesters of long-chain fatty acids.. The enzyme catalyses 1-tetradecanoylglycerol + H2O = tetradecanoate + glycerol + H(+). The catalysed reaction is 2-hexadecanoylglycerol + H2O = glycerol + hexadecanoate + H(+). It catalyses the reaction 1-(9Z-octadecenoyl)-glycerol + H2O = glycerol + (9Z)-octadecenoate + H(+). It carries out the reaction 2-(9Z-octadecenoyl)-glycerol + H2O = glycerol + (9Z)-octadecenoate + H(+). The enzyme catalyses 2-(9Z,12Z-octadecadienoyl)-glycerol + H2O = (9Z,12Z)-octadecadienoate + glycerol + H(+). The catalysed reaction is 1-(5Z,8Z,11Z,14Z-eicosatetraenoyl)-glycerol + H2O = glycerol + (5Z,8Z,11Z,14Z)-eicosatetraenoate + H(+). It catalyses the reaction 2-(5Z,8Z,11Z,14Z-eicosatetraenoyl)-glycerol + H2O = glycerol + (5Z,8Z,11Z,14Z)-eicosatetraenoate + H(+). It carries out the reaction prostaglandin D2-1-glycerol ester + H2O = prostaglandin D2 + glycerol + H(+). The enzyme catalyses 2-glyceryl-15-deoxy-Delta(12,14)-prostaglandin J2 + H2O = 15-deoxy-Delta(12,14)-prostaglandin J2 + glycerol + H(+). The catalysed reaction is 1-(9Z,12Z-octadecadienoyl)-glycerol + H2O = (9Z,12Z)-octadecadienoate + glycerol + H(+). Its function is as follows. Phosphatidylserine (PS) lipase that mediates the hydrolysis of phosphatidylserine to generate lysophosphatidylserine (LPS). LPS constitutes a class of signaling lipids that regulates immunological and neurological processes. Has no activity towards diacylglycerol, triacylglycerol or lysophosphatidylserine lipase. Also has monoacylglycerol lipase activity, with preference for 1-(9Z,12Z-octadecadienoyl)-glycerol (1-LG) and 2-glyceryl-15-deoxy-Delta(12,14)-prostaglandin J2 (15d-PGJ(2)-G). The polypeptide is Phosphatidylserine lipase ABHD16A (Rattus norvegicus (Rat)).